A 169-amino-acid chain; its full sequence is Cytochrome c oxidase subunit 4 isoform 1, mitochondrial (169 aa).

Residues 1–22 (MLATRVFSLIGRRAISTSVCVR) constitute a mitochondrion transit peptide. The Mitochondrial matrix portion of the chain corresponds to 23–98 (AHGSVVKSED…SFAEMNRSTN (76 aa)). At Lys-29 the chain carries N6-acetyllysine; alternate. At Lys-29 the chain carries N6-succinyllysine; alternate. Position 53 is an N6-acetyllysine (Lys-53). Ser-56 and Ser-58 each carry phosphoserine. Lys-60 carries the N6-acetyllysine; alternate modification. At Lys-60 the chain carries N6-succinyllysine; alternate. At Lys-67 the chain carries N6-acetyllysine. The helical transmembrane segment at 99–124 (EWKTVVGAAMFFIGFTALLLIWEKHY) threads the bilayer. The Mitochondrial intermembrane segment spans residues 125–169 (VYGPIPHTFEEEWVAKQTKRMLDMKVAPIQGFSAKWDYDKNEWKK).

The protein belongs to the cytochrome c oxidase IV family. As to quaternary structure, component of the cytochrome c oxidase (complex IV, CIV), a multisubunit enzyme composed of 14 subunits. The complex is composed of a catalytic core of 3 subunits MT-CO1, MT-CO2 and MT-CO3, encoded in the mitochondrial DNA, and 11 supernumerary subunits COX4I1 (or COX4I2), COX5A, COX5B, COX6A2 (or COX6A1), COX6B1 (or COX6B2), COX6C, COX7A1 (or COX7A2), COX7B, COX7C, COX8B and NDUFA4, which are encoded in the nuclear genome. The complex exists as a monomer or a dimer and forms supercomplexes (SCs) in the inner mitochondrial membrane with NADH-ubiquinone oxidoreductase (complex I, CI) and ubiquinol-cytochrome c oxidoreductase (cytochrome b-c1 complex, complex III, CIII), resulting in different assemblies (supercomplex SCI(1)III(2)IV(1) and megacomplex MCI(2)III(2)IV(2)). Interacts with PHB2; the interaction decreases in absence of SPHK2. Interacts with AFG1L. Interacts with ABCB7; this interaction allows the regulation of cellular iron homeostasis and cellular reactive oxygen species (ROS) levels in cardiomyocytes. Interacts with FLVCR2; this interaction occurs in the absence of heme and is disrupted upon heme binding. Interacts with IRGC.

The protein localises to the mitochondrion inner membrane. The protein operates within energy metabolism; oxidative phosphorylation. Functionally, component of the cytochrome c oxidase, the last enzyme in the mitochondrial electron transport chain which drives oxidative phosphorylation. The respiratory chain contains 3 multisubunit complexes succinate dehydrogenase (complex II, CII), ubiquinol-cytochrome c oxidoreductase (cytochrome b-c1 complex, complex III, CIII) and cytochrome c oxidase (complex IV, CIV), that cooperate to transfer electrons derived from NADH and succinate to molecular oxygen, creating an electrochemical gradient over the inner membrane that drives transmembrane transport and the ATP synthase. Cytochrome c oxidase is the component of the respiratory chain that catalyzes the reduction of oxygen to water. Electrons originating from reduced cytochrome c in the intermembrane space (IMS) are transferred via the dinuclear copper A center (CU(A)) of subunit 2 and heme A of subunit 1 to the active site in subunit 1, a binuclear center (BNC) formed by heme A3 and copper B (CU(B)). The BNC reduces molecular oxygen to 2 water molecules using 4 electrons from cytochrome c in the IMS and 4 protons from the mitochondrial matrix. This is Cytochrome c oxidase subunit 4 isoform 1, mitochondrial (COX4I1) from Bos taurus (Bovine).